Consider the following 172-residue polypeptide: Adenine phosphoribosyltransferase (172 aa).

This sequence belongs to the purine/pyrimidine phosphoribosyltransferase family. In terms of assembly, homodimer.

The protein resides in the cytoplasm. The enzyme catalyses AMP + diphosphate = 5-phospho-alpha-D-ribose 1-diphosphate + adenine. It participates in purine metabolism; AMP biosynthesis via salvage pathway; AMP from adenine: step 1/1. Functionally, catalyzes a salvage reaction resulting in the formation of AMP, that is energically less costly than de novo synthesis. The polypeptide is Adenine phosphoribosyltransferase (Anaeromyxobacter dehalogenans (strain 2CP-C)).